The sequence spans 222 residues: MDPTDLSFSPDEINKLIETGLNTVEYFTSQQVTGTSSLGKNTIPPGVTGLLTNAAEAKIQESTNHQKGSVGGGAKPKKPRPKIAIVPADDKTVPGKPIPNPLLGLDSTPSTQTVLDLSGKTLPSGSYKGVKLAKFGKENLMTRFIEEPRENPIATSSPIDFKRGRDTGGFHRREYSIGWVGDEVKVTEWCNPSCSPITAAARRFECTCHQCPVTCSECERDT.

The tract at residues 61 to 107 (ESTNHQKGSVGGGAKPKKPRPKIAIVPADDKTVPGKPIPNPLLGLDS) is disordered. Zn(2+)-binding residues include His-171, Cys-190, Cys-194, Cys-206, Cys-208, Cys-211, Cys-215, and Cys-218.

Belongs to the paramyxoviruses V protein family. As to quaternary structure, interacts with host DDB1, STAT2 and IFIH1/MDA5. Interacts with host RIGI regulatory protein (via CARDs domain) and host TRIM25 (via SPRY domain); these interactions prevent TRIM25-mediated ubiquitination of RIG-I and disrupts downstream RIG-I signaling.

It is found in the host cytoplasm. In terms of biological role, plays an essential role in the inhibition of host immune response. Prevents the establishment of cellular antiviral state by blocking interferon-alpha/beta (IFN-alpha/beta) production and signaling pathway. Interacts with host IFIH1/MDA5 and DHX58/LGP2 to inhibit the transduction pathway involved in the activation of IFN-beta promoter, thus protecting the virus against cell antiviral state. Efficiently blocks type I IFN signaling following infection by behaving as a substrate receptor for CUL4-DDB1 E3 ligase complex and targeting host STAT1 for proteasomal degradation. Blocks the type I interferon signaling pathway by disrupting the RIG-I signaling pathway. The sequence is that of Non-structural protein V (P/V) from Parainfluenza virus 5 (strain W3) (PIV5).